The primary structure comprises 89 residues: Small ribosomal subunit protein uS14A (89 aa).

The protein belongs to the universal ribosomal protein uS14 family. As to quaternary structure, part of the 30S ribosomal subunit. Contacts proteins S3 and S10.

Binds 16S rRNA, required for the assembly of 30S particles and may also be responsible for determining the conformation of the 16S rRNA at the A site. The sequence is that of Small ribosomal subunit protein uS14A from Listeria monocytogenes serotype 4b (strain F2365).